A 1261-amino-acid polypeptide reads, in one-letter code: Pentatricopeptide repeat-containing protein 5, mitochondrial (1261 aa).

PPR repeat units lie at residues 365-404, 405-442, 443-479, 480-514, 550-584, 806-849, 852-886, 887-924, 925-959, 960-995, 996-1031, 1032-1068, 1109-1143, 1144-1179, and 1180-1214; these read HPDLLPALIRALGRAKRLNSCFQLLERYNLSDPTSDTSMT, NVRSWEGLMEAYFDTDHHVEASALMKSFFRKADSNQVI, PSSILDCFLRRLAQLGHYKESAEWLGMAIEKISTYKA, SPSTLSSILEAACLNNNDKFAIAFVRKYTLSRFSD, TNFTFSNVYKAFIENGKIDVALRLLRKHIDPKVSL, HPEV…EKAN, MALILDAMILSSSFARQFKSSNLFCDNMKMLGYIP, RASTFAHLINNSTRRGDTDDATTALNIFEETKRHNVKP, SVFLYNAVLSKLGRARRTTECWKLFQEMKESGLLP, TSVTYGTVINAACRIGDESLAEKLFAEMENQPNYQP, RVAPYNTMIQFEVQTMFNREKALFYYNRLCATDIEP, SSHTYKLLMDAYGTLKPVNVGSVKAVLELMERTDVPI, DANLFQSQIESLIANDRIVEGIQIVSDMKRYNVSL, NAYIVNALIKGFTKVGMISKARYYFDLLECEGMSGK, and EPSTYENMVRAYLSVNDGRKAMEIVEQLKRKRYPL. The disordered stretch occupies residues 1225-1261; it reads NSHMGQKPKRRSLNTSHSSLASLGNASTQHSINSSIN. Residues 1237 to 1261 are compositionally biased toward polar residues; it reads LNTSHSSLASLGNASTQHSINSSIN.

The protein resides in the mitochondrion. Mitochondrial RNA-binding protein that acts as a general negative regulator of mitochondrial translation. The sequence is that of Pentatricopeptide repeat-containing protein 5, mitochondrial (ppr5) from Schizosaccharomyces pombe (strain 972 / ATCC 24843) (Fission yeast).